The primary structure comprises 479 residues: Glycine betaine methyltransferase (479 aa).

It belongs to the trimethylamine methyltransferase family.

The catalysed reaction is Co(I)-[glycine betaine-specific corrinoid protein] + glycine betaine + H(+) = methyl-Co(III)-[glycine betaine-specific corrinoid protein] + N,N-dimethylglycine. Methyltransferase able to methylate free cob(I)alamin in vitro, using glycine betaine as the methyl donor, yealding methylcobalamin (methylCbl) and dimethylglycine. In vivo, probably carries out the methylation of a corrinoid protein, likely the adjacently encoded DSY3155, with glycine betaine, to then supply methyl groups to tetrahydrofolate (THF) for ultimate conversion to carbon dioxide; oxidation of the methyl group would also provide reducing equivalents for anaerobic respiration. Thus, may function in the pathway that allows anaerobic methylotrophic growth of D.hafniense using glycine betaine. Cannot use quaternary amines such as carnitine and choline as substrates, nor tertiary amines such as dimethylglycine or trimethylamine. This chain is Glycine betaine methyltransferase, found in Desulfitobacterium hafniense (strain Y51).